Reading from the N-terminus, the 543-residue chain is Neurofilament light polypeptide (543 aa).

At Ser-2 the chain carries N-acetylserine. Residues 2-92 (SSFSYEPYYS…LKSIRTQEKA (91 aa)) are head. Thr-21 carries an O-linked (GlcNAc) threonine glycan. Arg-23 carries the post-translational modification Asymmetric dimethylarginine; alternate. At Arg-23 the chain carries Omega-N-methylarginine; alternate. O-linked (GlcNAc) serine glycosylation occurs at Ser-27. At Arg-30 the chain carries Omega-N-methylarginine. A Phosphotyrosine modification is found at Tyr-43. 3 positions are modified to phosphoserine: Ser-56, Ser-67, and Ser-103. Positions 90-400 (EKAQLQDLND…KLLEGEETRL (311 aa)) constitute an IF rod domain. The tract at residues 93–124 (QLQDLNDRFASFIERVHELEQQNKVLEAELLV) is coil 1A. Residues 125 to 137 (LRQKHSEPSRFRA) form a linker 1 region. Residues 138 to 234 (LYEQEIRDLR…KVHEEEIAEL (97 aa)) are coil 1B. The tract at residues 235 to 252 (QAQIQYAQISVEMDVTKP) is linker 12. The tract at residues 253–271 (DLSAALKDIRAQYEKLAAK) is coil 2A. The linker 2 stretch occupies residues 272 to 280 (NMQNAEEWF). Residues 281–396 (KSRFTVLTES…AAYRKLLEGE (116 aa)) form a coil 2B region. The interval 381–391 (ALDIEIAAYRK) is epitope; recognized by IF-specific monoclonal antibody. The interval 397-443 (ETRLSFTSVGSITSGYSQSSQVFGRSAYGGLQTSSYLMSTRSFPSYY) is tail, subdomain A. The interval 397–543 (ETRLSFTSVG…GEEQAAKKKD (147 aa)) is tail. The tail, subdomain B (acidic) stretch occupies residues 444–543 (TSHVQEEQIE…GEEQAAKKKD (100 aa)). A disordered region spans residues 462–543 (KAEEAKDEPP…GEEQAAKKKD (82 aa)). Residues 471–525 (PSEGEAEEEEKDKEEAEEEEAAEEEEAAKEESEEAKEEEEGGEGEEGEETKEAEE) show a composition bias toward acidic residues. Ser-472 and Ser-502 each carry phosphoserine. A Phosphothreonine modification is found at Thr-520. Basic and acidic residues predominate over residues 526–543 (EEKKVEGAGEEQAAKKKD).

It belongs to the intermediate filament family. In terms of assembly, forms homodimers (in vitro). Forms heterodimers with NEFH or NEFM; which can further hetero-oligomerize (in vitro). Forms heterodimers with INA (in vitro). Interacts with ARHGEF28. Interacts with TRIM2. Post-translationally, O-glycosylated. Phosphorylated in the head and rod regions by the PKC kinase PKN1, leading to the inhibition of polymerization. In terms of processing, ubiquitinated in the presence of TRIM2 and UBE2D1.

The protein localises to the cell projection. Its subcellular location is the axon. The protein resides in the cytoplasm. It is found in the cytoskeleton. In terms of biological role, neurofilaments usually contain three intermediate filament proteins: NEFL, NEFM, and NEFH which are involved in the maintenance of neuronal caliber. May additionally cooperate with the neuronal intermediate filament proteins PRPH and INA to form neuronal filamentous networks. The polypeptide is Neurofilament light polypeptide (NEFL) (Homo sapiens (Human)).